The following is a 386-amino-acid chain: MDSPKTLARVEVKENGDTFNVKAYEKAVKSYITKRKPLGEALDEEIMDELSVKFGIVDDALEDLFKQIQDAGISIVDKDGNPSPLALVTDEIEKEEVSDTAMDEIVTNVRIDDPVRMYLKEIGRYPLISLDEETKLAEAIIAGGEGAEFAKQMLAEANLRLVVSIAKRYSGRGMQFLDLIQEGNMGLMKAVDKFDHTKGFKFSTYATWWIRQAITRAIADQARTIRIPVHMVETINKLIRVQRNLLQELGRDPSPEEIGKELHMAPDKVREVLKIAQEPVSLETPIGEEDDSHLGDFIEDDVIESPVDYTNRILLREQLDEVMDTLTDREENVLRMRFGLDDGRMHTLEDVGKQFKVTRERIRQIEAKAIKKLRHPRRSKPLRDFM.

Residues 154-224 form a sigma-70 factor domain-2 region; it reads LAEANLRLVV…TRAIADQART (71 aa). An Interaction with polymerase core subunit RpoC motif is present at residues 178–181; sequence DLIQ. The segment at 233–309 is sigma-70 factor domain-3; the sequence is ETINKLIRVQ…DDVIESPVDY (77 aa). The tract at residues 322–375 is sigma-70 factor domain-4; sequence VMDTLTDREENVLRMRFGLDDGRMHTLEDVGKQFKVTRERIRQIEAKAIKKLRH. The segment at residues 348–367 is a DNA-binding region (H-T-H motif); sequence LEDVGKQFKVTRERIRQIEA.

The protein belongs to the sigma-70 factor family. RpoD/SigA subfamily. As to quaternary structure, interacts transiently with the RNA polymerase catalytic core.

It localises to the cytoplasm. In terms of biological role, sigma factors are initiation factors that promote the attachment of RNA polymerase to specific initiation sites and are then released. This sigma factor is the primary sigma factor during exponential growth. The protein is RNA polymerase sigma factor SigA of Lactococcus lactis subsp. lactis (strain IL1403) (Streptococcus lactis).